Consider the following 366-residue polypeptide: tRNA 2-selenouridine synthase (366 aa).

The 124-residue stretch at F12–H135 folds into the Rhodanese domain. C95 functions as the S-selanylcysteine intermediate in the catalytic mechanism.

The protein belongs to the SelU family. Monomer.

It carries out the reaction 5-methylaminomethyl-2-thiouridine(34) in tRNA + selenophosphate + (2E)-geranyl diphosphate + H2O + H(+) = 5-methylaminomethyl-2-selenouridine(34) in tRNA + (2E)-thiogeraniol + phosphate + diphosphate. The enzyme catalyses 5-methylaminomethyl-2-thiouridine(34) in tRNA + (2E)-geranyl diphosphate = 5-methylaminomethyl-S-(2E)-geranyl-thiouridine(34) in tRNA + diphosphate. The catalysed reaction is 5-methylaminomethyl-S-(2E)-geranyl-thiouridine(34) in tRNA + selenophosphate + H(+) = 5-methylaminomethyl-2-(Se-phospho)selenouridine(34) in tRNA + (2E)-thiogeraniol. It catalyses the reaction 5-methylaminomethyl-2-(Se-phospho)selenouridine(34) in tRNA + H2O = 5-methylaminomethyl-2-selenouridine(34) in tRNA + phosphate. Involved in the post-transcriptional modification of the uridine at the wobble position (U34) of tRNA(Lys), tRNA(Glu) and tRNA(Gln). Catalyzes the conversion of 2-thiouridine (S2U-RNA) to 2-selenouridine (Se2U-RNA). Acts in a two-step process involving geranylation of 2-thiouridine (S2U) to S-geranyl-2-thiouridine (geS2U) and subsequent selenation of the latter derivative to 2-selenouridine (Se2U) in the tRNA chain. The polypeptide is tRNA 2-selenouridine synthase (Pseudomonas syringae pv. syringae (strain B728a)).